Here is a 221-residue protein sequence, read N- to C-terminus: 7-cyano-7-deazaguanine synthase (221 aa).

ATP is bound at residue 7-17 (LSGGMDSTTLL). The Zn(2+) site is built by C183, C191, C194, and C197.

Belongs to the QueC family. Homodimer. Zn(2+) serves as cofactor.

The catalysed reaction is 7-carboxy-7-deazaguanine + NH4(+) + ATP = 7-cyano-7-deazaguanine + ADP + phosphate + H2O + H(+). The protein operates within purine metabolism; 7-cyano-7-deazaguanine biosynthesis. Catalyzes the ATP-dependent conversion of 7-carboxy-7-deazaguanine (CDG) to 7-cyano-7-deazaguanine (preQ(0)). The protein is 7-cyano-7-deazaguanine synthase of Caldicellulosiruptor bescii (strain ATCC BAA-1888 / DSM 6725 / KCTC 15123 / Z-1320) (Anaerocellum thermophilum).